A 223-amino-acid chain; its full sequence is Uracil-DNA glycosylase (223 aa).

Asp61 (proton acceptor) is an active-site residue.

Belongs to the uracil-DNA glycosylase (UDG) superfamily. UNG family.

Its subcellular location is the cytoplasm. It catalyses the reaction Hydrolyzes single-stranded DNA or mismatched double-stranded DNA and polynucleotides, releasing free uracil.. Excises uracil residues from the DNA which can arise as a result of misincorporation of dUMP residues by DNA polymerase or due to deamination of cytosine. The protein is Uracil-DNA glycosylase of Histophilus somni (strain 129Pt) (Haemophilus somnus).